The following is a 603-amino-acid chain: UvrABC system protein C (603 aa).

One can recognise a GIY-YIG domain in the interval Thr-17–Val-94. In terms of domain architecture, UVR spans Ser-199–Ile-234.

The protein belongs to the UvrC family. In terms of assembly, interacts with UvrB in an incision complex.

It localises to the cytoplasm. The UvrABC repair system catalyzes the recognition and processing of DNA lesions. UvrC both incises the 5' and 3' sides of the lesion. The N-terminal half is responsible for the 3' incision and the C-terminal half is responsible for the 5' incision. This is UvrABC system protein C from Borrelia garinii subsp. bavariensis (strain ATCC BAA-2496 / DSM 23469 / PBi) (Borreliella bavariensis).